The sequence spans 196 residues: Imidazole glycerol phosphate synthase subunit HisH (196 aa).

The 195-residue stretch at 2–196 (KVAVIKYNAG…ERIIKNFLEL (195 aa)) folds into the Glutamine amidotransferase type-1 domain. Cys77 functions as the Nucleophile in the catalytic mechanism. Residues His178 and Glu180 contribute to the active site.

As to quaternary structure, heterodimer of HisH and HisF.

The protein resides in the cytoplasm. It catalyses the reaction 5-[(5-phospho-1-deoxy-D-ribulos-1-ylimino)methylamino]-1-(5-phospho-beta-D-ribosyl)imidazole-4-carboxamide + L-glutamine = D-erythro-1-(imidazol-4-yl)glycerol 3-phosphate + 5-amino-1-(5-phospho-beta-D-ribosyl)imidazole-4-carboxamide + L-glutamate + H(+). The catalysed reaction is L-glutamine + H2O = L-glutamate + NH4(+). It participates in amino-acid biosynthesis; L-histidine biosynthesis; L-histidine from 5-phospho-alpha-D-ribose 1-diphosphate: step 5/9. Functionally, IGPS catalyzes the conversion of PRFAR and glutamine to IGP, AICAR and glutamate. The HisH subunit catalyzes the hydrolysis of glutamine to glutamate and ammonia as part of the synthesis of IGP and AICAR. The resulting ammonia molecule is channeled to the active site of HisF. The polypeptide is Imidazole glycerol phosphate synthase subunit HisH (Bacteroides fragilis (strain YCH46)).